The sequence spans 318 residues: Zinc chaperone YjiA (318 aa).

GTP is bound at residue 11-19 (GFLGAGKTT). Zn(2+) contacts are provided by Glu-37, Glu-42, Cys-66, Glu-74, and His-114. The CXCC motif motif lies at 64–67 (CICC). GTP is bound at residue Asp-161. Zn(2+) is bound by residues Glu-167, His-170, and His-187. The region spanning 224–315 (ISSIVVELDY…EEEIRAAFAG (92 aa)) is the CobW C-terminal domain.

This sequence belongs to the SIMIBI class G3E GTPase family. ZNG1 subfamily. In terms of assembly, monomer in the apo form. Metal binding induces oligomerization. Forms homodimers and higher oligomers.

The catalysed reaction is GTP + H2O = GDP + phosphate + H(+). With respect to regulation, GTPase activity is inhibited by metal binding. Activity is decreased in the presence of Co(II) or Ni(II), and is completely inhibited in the presence of Zn(II). Functionally, zinc chaperone that directly transfers zinc cofactor to target proteins, thereby activating them. Zinc is transferred from the CXCC motif in the GTPase domain to the zinc binding site in target proteins in a process requiring GTP hydrolysis. The sequence is that of Zinc chaperone YjiA (yjiA) from Escherichia coli (strain K12).